The chain runs to 680 residues: Oligopeptidase A (680 aa).

Position 469 (His469) interacts with Zn(2+). Glu470 is a catalytic residue. 2 residues coordinate Zn(2+): His473 and His476.

Belongs to the peptidase M3 family. Zn(2+) is required as a cofactor.

It carries out the reaction Hydrolysis of oligopeptides, with broad specificity. Gly or Ala commonly occur as P1 or P1' residues, but more distant residues are also important, as is shown by the fact that Z-Gly-Pro-Gly-|-Gly-Pro-Ala is cleaved, but not Z-(Gly)(5).. In terms of biological role, may play a specific role in the degradation of signal peptides after they are released from precursor forms of secreted proteins. Can cleave N-acetyl-L-Ala(4). The chain is Oligopeptidase A (prlC) from Salmonella typhimurium (strain LT2 / SGSC1412 / ATCC 700720).